The sequence spans 207 residues: Outer-membrane lipoprotein carrier protein (207 aa).

Residues 1–22 (MKLSEKFCVFLFFLLFTSTTHA) form the signal peptide.

The protein belongs to the LolA family. As to quaternary structure, monomer.

Its subcellular location is the periplasm. In terms of biological role, participates in the translocation of lipoproteins from the inner membrane to the outer membrane. Only forms a complex with a lipoprotein if the residue after the N-terminal Cys is not an aspartate (The Asp acts as a targeting signal to indicate that the lipoprotein should stay in the inner membrane). The sequence is that of Outer-membrane lipoprotein carrier protein from Nitrosospira multiformis (strain ATCC 25196 / NCIMB 11849 / C 71).